An 80-amino-acid polypeptide reads, in one-letter code: Large ribosomal subunit protein bL31B (80 aa).

Belongs to the bacterial ribosomal protein bL31 family. Type B subfamily. As to quaternary structure, part of the 50S ribosomal subunit.

This chain is Large ribosomal subunit protein bL31B, found in Stenotrophomonas maltophilia (strain K279a).